The following is a 226-amino-acid chain: Urease accessory protein UreF (226 aa).

This sequence belongs to the UreF family. As to quaternary structure, ureD, UreF and UreG form a complex that acts as a GTP-hydrolysis-dependent molecular chaperone, activating the urease apoprotein by helping to assemble the nickel containing metallocenter of UreC. The UreE protein probably delivers the nickel.

Its subcellular location is the cytoplasm. Its function is as follows. Required for maturation of urease via the functional incorporation of the urease nickel metallocenter. In Burkholderia lata (strain ATCC 17760 / DSM 23089 / LMG 22485 / NCIMB 9086 / R18194 / 383), this protein is Urease accessory protein UreF.